We begin with the raw amino-acid sequence, 189 residues long: Protein GrpE (189 aa).

Residues 1 to 14 (MTEKNEEVVEDKNI) show a composition bias toward basic and acidic residues. The segment at 1–38 (MTEKNEEVVEDKNISDQTDENLTEEIESEADDLQVEPD) is disordered. Residues 17 to 35 (QTDENLTEEIESEADDLQV) show a composition bias toward acidic residues.

It belongs to the GrpE family. As to quaternary structure, homodimer.

The protein resides in the cytoplasm. Functionally, participates actively in the response to hyperosmotic and heat shock by preventing the aggregation of stress-denatured proteins, in association with DnaK and GrpE. It is the nucleotide exchange factor for DnaK and may function as a thermosensor. Unfolded proteins bind initially to DnaJ; upon interaction with the DnaJ-bound protein, DnaK hydrolyzes its bound ATP, resulting in the formation of a stable complex. GrpE releases ADP from DnaK; ATP binding to DnaK triggers the release of the substrate protein, thus completing the reaction cycle. Several rounds of ATP-dependent interactions between DnaJ, DnaK and GrpE are required for fully efficient folding. This Leuconostoc mesenteroides subsp. mesenteroides (strain ATCC 8293 / DSM 20343 / BCRC 11652 / CCM 1803 / JCM 6124 / NCDO 523 / NBRC 100496 / NCIMB 8023 / NCTC 12954 / NRRL B-1118 / 37Y) protein is Protein GrpE.